We begin with the raw amino-acid sequence, 319 residues long: L-lactate dehydrogenase (319 aa).

Residues V17, D38, K43, Y69, and 83–84 each bind NAD(+); that span reads GA. Substrate-binding residues include Q86 and R92. Residues T105, 122 to 124, and S147 each bind NAD(+); that span reads ATN. Residue 124 to 127 coordinates substrate; that stretch reads NPVD. Substrate is bound at residue 152–155; that stretch reads DTAR. 2 residues coordinate beta-D-fructose 1,6-bisphosphate: R157 and H172. Residue H179 is the Proton acceptor of the active site. Residue Y224 is modified to Phosphotyrosine. Residue T233 coordinates substrate.

The protein belongs to the LDH/MDH superfamily. LDH family. Homotetramer.

The protein resides in the cytoplasm. It catalyses the reaction (S)-lactate + NAD(+) = pyruvate + NADH + H(+). It participates in fermentation; pyruvate fermentation to lactate; (S)-lactate from pyruvate: step 1/1. Allosterically activated by fructose 1,6-bisphosphate (FBP). Its function is as follows. Catalyzes the conversion of lactate to pyruvate. In Geobacillus sp. (strain WCH70), this protein is L-lactate dehydrogenase.